The chain runs to 493 residues: 6-phosphogluconate dehydrogenase, decarboxylating (493 aa).

Residues 12 to 17 (GLAVMG), 35 to 37 (NRT), 77 to 79 (VKA), and asparagine 105 each bind NADP(+). Residues asparagine 105 and 131–133 (SGG) each bind substrate. Lysine 187 (proton acceptor) is an active-site residue. Position 190–191 (190–191 (HN)) interacts with substrate. Glutamate 194 functions as the Proton donor in the catalytic mechanism. Substrate-binding residues include tyrosine 195, lysine 266, arginine 293, arginine 456, and histidine 462.

This sequence belongs to the 6-phosphogluconate dehydrogenase family. Homodimer.

It catalyses the reaction 6-phospho-D-gluconate + NADP(+) = D-ribulose 5-phosphate + CO2 + NADPH. It participates in carbohydrate degradation; pentose phosphate pathway; D-ribulose 5-phosphate from D-glucose 6-phosphate (oxidative stage): step 3/3. Functionally, catalyzes the oxidative decarboxylation of 6-phosphogluconate to ribulose 5-phosphate and CO(2), with concomitant reduction of NADP to NADPH. The protein is 6-phosphogluconate dehydrogenase, decarboxylating (gnd) of Dictyostelium discoideum (Social amoeba).